The sequence spans 358 residues: Methylthioribose-1-phosphate isomerase (358 aa).

Residues 54–56 (RGA), R96, and Q205 each bind substrate. D246 acts as the Proton donor in catalysis. Substrate is bound at residue 256–257 (NK).

It belongs to the eIF-2B alpha/beta/delta subunits family. MtnA subfamily.

The catalysed reaction is 5-(methylsulfanyl)-alpha-D-ribose 1-phosphate = 5-(methylsulfanyl)-D-ribulose 1-phosphate. The protein operates within amino-acid biosynthesis; L-methionine biosynthesis via salvage pathway; L-methionine from S-methyl-5-thio-alpha-D-ribose 1-phosphate: step 1/6. Functionally, catalyzes the interconversion of methylthioribose-1-phosphate (MTR-1-P) into methylthioribulose-1-phosphate (MTRu-1-P). The protein is Methylthioribose-1-phosphate isomerase of Pseudomonas fluorescens (strain Pf0-1).